The primary structure comprises 158 residues: NAD(P)H-quinone oxidoreductase subunit N (158 aa).

Belongs to the complex I NdhN subunit family. In terms of assembly, NDH-1 can be composed of about 15 different subunits; different subcomplexes with different compositions have been identified which probably have different functions.

Its subcellular location is the cellular thylakoid membrane. It carries out the reaction a plastoquinone + NADH + (n+1) H(+)(in) = a plastoquinol + NAD(+) + n H(+)(out). It catalyses the reaction a plastoquinone + NADPH + (n+1) H(+)(in) = a plastoquinol + NADP(+) + n H(+)(out). In terms of biological role, NDH-1 shuttles electrons from an unknown electron donor, via FMN and iron-sulfur (Fe-S) centers, to quinones in the respiratory and/or the photosynthetic chain. The immediate electron acceptor for the enzyme in this species is believed to be plastoquinone. Couples the redox reaction to proton translocation, and thus conserves the redox energy in a proton gradient. Cyanobacterial NDH-1 also plays a role in inorganic carbon-concentration. This Gloeothece citriformis (strain PCC 7424) (Cyanothece sp. (strain PCC 7424)) protein is NAD(P)H-quinone oxidoreductase subunit N.